A 1241-amino-acid polypeptide reads, in one-letter code: MVHPIQIGKRTRMSFSKVKEMCPMPNLIEVQLNSYDWFWKEGLNEVFDDVNPIQDYTGNLILEFIDYNLDKDAIKYSVEECKERDATYAAPLKVKVRLLNKETGEVKEQEVFMGDFPLMTQQGTFVINGAERVIVSQLVRSPGAYYGYDVDKTGKKLFSSTVIPNRGAWLEYETDSNDIIYVRIDKTRKLPISILIRALGLGSDAEIVDWFGEEERLKATIEKDNTKTREEALLEIYKRLRPGEPPTVDSALSLINSLFFDAKRYDLSRVGRYKFNKKLAIYIRLLNQVAAEDVVNPFTGEIIVQKGETIDREKALEIQNCAINAVNIQVEDKVIKVIGNNFVDIHKFIDFDISDLKIKEHVHYPTLKNILDNYTDEKSIKEEIKKNIHELIPKHIVVDDIYATISYELGLPYEIGTIDDIDHLGNRRLRSVGELLQNQFRIGLSRMERVVKERMTIQDQEVITPQALINIRPVAAAIKEFFGSSQLSQFMDQTNPLSELTHKRRLSALGPGGLSRERAGFEVRDVHHSHYGRMCPIETPEGPNIGLINSLACYAKVNEYGFIETPYRLVDKKEARVTDEIVYLTADEEDHYLVAQAKEPLDENGCFIDEKITVRDLEDVIVVSKDQVDLMDVSPSQIVSVATAMIPFLENDDASRALMGSNMQRQAVPLLKPAAPIVGTGIEYKAAVDSGVLPKAEHDGVIEYVSSTEVRIRRDSDGGLDKHKLLKYKRSNQGTCINQRPIVSKGEKVKAGDVLADGPSTDFGEIALGQNIRMGFITWEGYNYEDAMLVSEQLVRDDIFTSIHIEEYESEARDTKLGPEEITRDIPNVGEDALKNIDERGIVRIGAEVRSGDILVGKVTPKGETELTAEERLLRAIFGEKAREVRDTSLRVPHGEAGIIVDVKVFTRENGDELPPGVNELVRCYIAQKRKISVGDKMAGRHGNKGVISRILPEEDMPFLPDGRPLQICLNPLGVPSRMNIGQVLEVHLGWAAGEMGWHIATPVFNGAFEDEIVELLQEAGYSEDGKTVLYDGRTGEPFDNRVTVGYMYILKLHHLVDDKIHARSTGPYSLVTQQPLGGKAQFGGQRFGEMEVWALEAYGAAHTLQEVLTVKSDDVVGRVKTYEAIVKGENIPEPGVPESFKVLIKELQALCLDVKVLSDTNEEIKIKESSEEDMEDLGVNIEGTEDEIVPTAEKRSSNQDEEALELVDNEEFEDIKLEYDDLQLDELENGLELEDFNDEH.

Positions 1186 to 1210 (EDEIVPTAEKRSSNQDEEALELVDN) are disordered. Residues 1200-1210 (QDEEALELVDN) are compositionally biased toward acidic residues.

Belongs to the RNA polymerase beta chain family. In terms of assembly, the RNAP catalytic core consists of 2 alpha, 1 beta, 1 beta' and 1 omega subunit. When a sigma factor is associated with the core the holoenzyme is formed, which can initiate transcription.

The catalysed reaction is RNA(n) + a ribonucleoside 5'-triphosphate = RNA(n+1) + diphosphate. DNA-dependent RNA polymerase catalyzes the transcription of DNA into RNA using the four ribonucleoside triphosphates as substrates. The protein is DNA-directed RNA polymerase subunit beta of Clostridium novyi (strain NT).